We begin with the raw amino-acid sequence, 61 residues long: N-acetyl-D-glucosamine kinase (61 aa).

Position 30 is a phosphotyrosine (tyrosine 30). Serine 45 is a binding site for ATP.

The protein belongs to the eukaryotic-type N-acetylglucosamine kinase family. Homodimer.

It catalyses the reaction N-acetyl-D-glucosamine + ATP = N-acetyl-D-glucosamine 6-phosphate + ADP + H(+). It carries out the reaction aldehydo-N-acetyl-D-mannosamine + ATP = aldehydo-N-acetyl-D-mannosamine 6-phosphate + ADP + H(+). The enzyme catalyses N-acetyl-D-muramoyl-L-alanyl-D-isoglutamine + ATP = 6-O-phospho-N-acetyl-D-muramoyl-L-alanyl-D-isoglutamine + ADP + H(+). The protein operates within amino-sugar metabolism; N-acetylneuraminate degradation. Converts endogenous N-acetylglucosamine (GlcNAc), a major component of complex carbohydrates, from lysosomal degradation or nutritional sources into GlcNAc 6-phosphate. Also has N-acetylmannosamine (ManNAc) kinase activity. Involved in the N-glycolylneuraminic acid (Neu5Gc) degradation pathway. Also involved in innate immunity by promoting detection of bacterial peptidoglycan by NOD2: acts by catalyzing phosphorylation of muramyl dipeptide (MDP), a fragment of bacterial peptidoglycan, to generate 6-O-phospho-muramyl dipeptide, which acts as a direct ligand for NOD2. This is N-acetyl-D-glucosamine kinase from Mesocricetus auratus (Golden hamster).